Here is a 262-residue protein sequence, read N- to C-terminus: Matrilysin (262 aa).

The N-terminal stretch at 1–12 (LCVLCLLPQSPA) is a signal peptide. A propeptide spans 13–89 (LPLPREAGGH…PRCGLPDTGE (77 aa)) (activation peptide). The Cysteine switch signature appears at 80-87 (PRCGLPDT). Residue Cys-82 coordinates Zn(2+). Residue Asp-148 participates in Ca(2+) binding. His-158 and Asp-160 together coordinate Zn(2+). Residues Asp-165, Gly-166, Gly-168, and Thr-170 each coordinate Ca(2+). Residue His-173 coordinates Zn(2+). Gly-180, Gly-182, and Asp-184 together coordinate Ca(2+). Position 186 (His-186) interacts with Zn(2+). Asp-188 and Glu-191 together coordinate Ca(2+). Residue His-209 participates in Zn(2+) binding. Residue Glu-210 is part of the active site. His-213 and His-219 together coordinate Zn(2+).

This sequence belongs to the peptidase M10A family. The cofactor is Ca(2+). Requires Zn(2+) as cofactor.

Its subcellular location is the secreted. It localises to the extracellular space. The protein resides in the extracellular matrix. It catalyses the reaction Cleavage of 14-Ala-|-Leu-15 and 16-Tyr-|-Leu-17 in B chain of insulin. No action on collagen types I, II, IV, V. Cleaves gelatin chain alpha2(I) &gt; alpha1(I).. In terms of biological role, degrades casein, gelatins of types I, III, IV, and V, and fibronectin. Activates procollagenase. The protein is Matrilysin (MMP7) of Felis catus (Cat).